The chain runs to 232 residues: Large ribosomal subunit protein uL3 (232 aa).

This sequence belongs to the universal ribosomal protein uL3 family. In terms of assembly, part of the 50S ribosomal subunit. Forms a cluster with proteins L14 and L19.

Functionally, one of the primary rRNA binding proteins, it binds directly near the 3'-end of the 23S rRNA, where it nucleates assembly of the 50S subunit. This is Large ribosomal subunit protein uL3 from Sorangium cellulosum (strain So ce56) (Polyangium cellulosum (strain So ce56)).